The chain runs to 162 residues: Ribosome maturation factor RimP (162 aa).

It belongs to the RimP family.

The protein resides in the cytoplasm. Required for maturation of 30S ribosomal subunits. In Leptospira biflexa serovar Patoc (strain Patoc 1 / Ames), this protein is Ribosome maturation factor RimP.